Reading from the N-terminus, the 86-residue chain is EMBRYO SURROUNDING FACTOR 1-like protein 2 (86 aa).

The signal sequence occupies residues M1–Y21. Disulfide bonds link C39-C54, C44-C82, C52-C78, and C55-C65.

This sequence belongs to the MEG family.

The chain is EMBRYO SURROUNDING FACTOR 1-like protein 2 (ESFL2) from Arabidopsis thaliana (Mouse-ear cress).